Here is a 290-residue protein sequence, read N- to C-terminus: Cytochrome bo(3) ubiquinol oxidase subunit 2 (290 aa).

The signal sequence occupies residues 1–24 (MISINFNNFFKTLLLILIAFTLHG). Cysteine 25 carries N-palmitoyl cysteine lipidation. Cysteine 25 carries S-diacylglycerol cysteine lipidation. Residues 25-42 (CDSILFNPHGIIAIQECS) are Extracellular-facing. The chain crosses the membrane as a helical span at residues 43 to 63 (ILLISFLIMLFVIIPVIFMTI). The Cytoplasmic segment spans residues 64–87 (YFSVKYRASNINAKYKPDWCDSKK). A helical membrane pass occupies residues 88 to 108 (IEIIVWTIPISIILFLAFVTW). Over 109–290 (NYSHILDPKK…TYSKNKVFKH (182 aa)) the chain is Extracellular.

The protein belongs to the cytochrome c oxidase subunit 2 family. In terms of assembly, heterooctamer of two A chains, two B chains, two C chains and two D chains.

It localises to the cell membrane. Cytochrome bo(3) ubiquinol terminal oxidase is the component of the aerobic respiratory chain of E.coli that predominates when cells are grown at high aeration. Has proton pump activity across the membrane in addition to electron transfer, pumping 2 protons/electron. This is Cytochrome bo(3) ubiquinol oxidase subunit 2 (cyoA) from Buchnera aphidicola subsp. Schizaphis graminum (strain Sg).